Reading from the N-terminus, the 162-residue chain is Transcription elongation factor GreA (162 aa).

The stretch at 44–69 forms a coiled coil; that stretch reads SENAEYEAAREKQAFVEARIKHLEDI.

This sequence belongs to the GreA/GreB family.

In terms of biological role, necessary for efficient RNA polymerase transcription elongation past template-encoded arresting sites. The arresting sites in DNA have the property of trapping a certain fraction of elongating RNA polymerases that pass through, resulting in locked ternary complexes. Cleavage of the nascent transcript by cleavage factors such as GreA or GreB allows the resumption of elongation from the new 3'terminus. GreA releases sequences of 2 to 3 nucleotides. The protein is Transcription elongation factor GreA of Rickettsia bellii (strain RML369-C).